The primary structure comprises 241 residues: Tumor necrosis factor receptor superfamily member 18 (241 aa).

The N-terminal stretch at 1 to 25 is a signal peptide; it reads MAQHGAMGAFRALCGLALLCALSLG. The Extracellular portion of the chain corresponds to 26 to 162; it reads QRPTGGPGCG…CVPGSPPAEP (137 aa). Intrachain disulfides connect Cys34–Cys49, Cys74–Cys86, Cys81–Cys94, Cys115–Cys134, and Cys128–Cys153. 3 TNFR-Cys repeats span residues 34–72, 74–112, and 115–153; these read CGPG…EWDC, CVQP…GFQC, and CASG…NAVC. N-linked (GlcNAc...) asparagine glycosylation is present at Asn146. The helical transmembrane segment at 163 to 183 threads the bilayer; that stretch reads LGWLTVVLLAVAACVLLLTSA. Topologically, residues 184-241 are cytoplasmic; the sequence is QLGLHIWQLRSQCMWPRETQLLLEVPPSTEDARSCQFPEEERGERSAEEKGRLGDLWV. Positions 214–241 are disordered; that stretch reads DARSCQFPEEERGERSAEEKGRLGDLWV. Residues 222 to 241 are compositionally biased toward basic and acidic residues; sequence EEERGERSAEEKGRLGDLWV.

As to quaternary structure, binds to TRAF1, TRAF2, and TRAF3, but not TRAF5 and TRAF6. Binds through its C-terminus to SIVA1/SIVA. As to expression, expressed in lymph node, peripheral blood leukocytes and weakly in spleen.

Its subcellular location is the cell membrane. The protein localises to the secreted. In terms of biological role, receptor for TNFSF18. Seems to be involved in interactions between activated T-lymphocytes and endothelial cells and in the regulation of T-cell receptor-mediated cell death. Mediated NF-kappa-B activation via the TRAF2/NIK pathway. This Homo sapiens (Human) protein is Tumor necrosis factor receptor superfamily member 18 (TNFRSF18).